The primary structure comprises 241 residues: DNA repair protein RecO (241 aa).

This sequence belongs to the RecO family.

In terms of biological role, involved in DNA repair and RecF pathway recombination. In Azobacteroides pseudotrichonymphae genomovar. CFP2, this protein is DNA repair protein RecO.